A 184-amino-acid chain; its full sequence is dCTP deaminase (184 aa).

107-112 is a dCTP binding site; that stretch reads KSTYAR. Catalysis depends on Glu133, which acts as the Proton donor/acceptor. Positions 152, 166, and 176 each coordinate dCTP.

This sequence belongs to the dCTP deaminase family. Homotrimer.

The enzyme catalyses dCTP + H2O + H(+) = dUTP + NH4(+). The protein operates within pyrimidine metabolism; dUMP biosynthesis; dUMP from dCTP (dUTP route): step 1/2. Functionally, catalyzes the deamination of dCTP to dUTP. In Herpetosiphon aurantiacus (strain ATCC 23779 / DSM 785 / 114-95), this protein is dCTP deaminase.